The primary structure comprises 129 residues: Small ribosomal subunit protein uS11 (129 aa).

Belongs to the universal ribosomal protein uS11 family. As to quaternary structure, part of the 30S ribosomal subunit. Interacts with proteins S7 and S18. Binds to IF-3.

In terms of biological role, located on the platform of the 30S subunit, it bridges several disparate RNA helices of the 16S rRNA. Forms part of the Shine-Dalgarno cleft in the 70S ribosome. The polypeptide is Small ribosomal subunit protein uS11 (Maridesulfovibrio salexigens (strain ATCC 14822 / DSM 2638 / NCIMB 8403 / VKM B-1763) (Desulfovibrio salexigens)).